Here is a 468-residue protein sequence, read N- to C-terminus: 3-isopropylmalate dehydratase large subunit (468 aa).

[4Fe-4S] cluster is bound by residues Cys-348, Cys-409, and Cys-412.

This sequence belongs to the aconitase/IPM isomerase family. LeuC type 1 subfamily. Heterodimer of LeuC and LeuD. [4Fe-4S] cluster serves as cofactor.

It carries out the reaction (2R,3S)-3-isopropylmalate = (2S)-2-isopropylmalate. Its pathway is amino-acid biosynthesis; L-leucine biosynthesis; L-leucine from 3-methyl-2-oxobutanoate: step 2/4. Functionally, catalyzes the isomerization between 2-isopropylmalate and 3-isopropylmalate, via the formation of 2-isopropylmaleate. In Dechloromonas aromatica (strain RCB), this protein is 3-isopropylmalate dehydratase large subunit.